A 475-amino-acid chain; its full sequence is Sulfate adenylyltransferase subunit 1 (475 aa).

A tr-type G domain is found at 25-239 (KSLLRFLTCG…EVLETVEIQR (215 aa)). The tract at residues 34–41 (GSVDDGKS) is G1. 34 to 41 (GSVDDGKS) is a binding site for GTP. Residues 92-96 (GITID) form a G2 region. The G3 stretch occupies residues 113–116 (DTPG). GTP is bound by residues 113-117 (DTPGH) and 168-171 (NKMD). The interval 168–171 (NKMD) is G4. The interval 206 to 208 (SAL) is G5.

This sequence belongs to the TRAFAC class translation factor GTPase superfamily. Classic translation factor GTPase family. CysN/NodQ subfamily. In terms of assembly, heterodimer composed of CysD, the smaller subunit, and CysN.

It carries out the reaction sulfate + ATP + H(+) = adenosine 5'-phosphosulfate + diphosphate. The protein operates within sulfur metabolism; hydrogen sulfide biosynthesis; sulfite from sulfate: step 1/3. With CysD forms the ATP sulfurylase (ATPS) that catalyzes the adenylation of sulfate producing adenosine 5'-phosphosulfate (APS) and diphosphate, the first enzymatic step in sulfur assimilation pathway. APS synthesis involves the formation of a high-energy phosphoric-sulfuric acid anhydride bond driven by GTP hydrolysis by CysN coupled to ATP hydrolysis by CysD. In Escherichia coli O127:H6 (strain E2348/69 / EPEC), this protein is Sulfate adenylyltransferase subunit 1.